A 90-amino-acid chain; its full sequence is UPF0223 protein LMHCC_1569 (90 aa).

Belongs to the UPF0223 family.

This chain is UPF0223 protein LMHCC_1569, found in Listeria monocytogenes serotype 4a (strain HCC23).